Reading from the N-terminus, the 266-residue chain is N-acetyltransferase ECO1 (266 aa).

The CCHH-type zinc finger occupies 31–55; that stretch reads KKCTECQMSYIIDSPADCAEHKKYH. The 159-residue stretch at 108–266 folds into the N-acetyltransferase domain; sequence TPGKTAEVKA…SGELLIPCYI (159 aa).

This sequence belongs to the acetyltransferase family. ECO subfamily.

The protein localises to the nucleus. Its function is as follows. Probable acetyltransferase required for the establishment of sister chromatid cohesion and couple the processes of cohesion and DNA replication to ensure that only sister chromatids become paired together. In contrast to the structural cohesins, the deposition and establishment factors are required only during S phase. Acts by acetylating the cohesin complex component SMC3. This chain is N-acetyltransferase ECO1 (ECO1), found in Eremothecium gossypii (strain ATCC 10895 / CBS 109.51 / FGSC 9923 / NRRL Y-1056) (Yeast).